Here is a 597-residue protein sequence, read N- to C-terminus: Pentatricopeptide repeat-containing protein At2g21090 (597 aa).

13 PPR repeats span residues 45–79 (PFDL…GFKR), 81–111 (NTLL…MHLR), 112–142 (NLYS…MPER), 143–177 (DVVS…GIKF), 178–212 (NEFS…GFLS), 213–243 (NVVL…MTVK), 244–274 (DIHI…MPEK), 275–309 (NPVS…GVKP), 310–344 (EQFT…NVRP), 345–375 (NAIV…CDDK), 377–411 (DCVF…RVQP), 412–447 (NRTT…GIVP), and 448–478 (DQEH…MPFE). Residues 483 to 558 (IWNAILGVCR…EKAVSWIEIE (76 aa)) form a type E motif region. The type E(+) motif stretch occupies residues 559-591 (KKVEAFTVSDGSHAHARKEEIYFILHNLAAVIE).

The protein belongs to the PPR family. PCMP-E subfamily.

The protein is Pentatricopeptide repeat-containing protein At2g21090 (PCMP-E48) of Arabidopsis thaliana (Mouse-ear cress).